Consider the following 306-residue polypeptide: Uracil phosphoribosyltransferase homolog (306 aa).

Disordered stretches follow at residues 1-28 and 58-87; these read MATE…NPEP and SSVP…NYDA. Composition is skewed to polar residues over residues 13–28 and 70–79; these read CHNQ…NPEP and GGATFNSENN. Residues Arg130, Arg139, and 173–176 each bind GTP; that span reads EKGN. Residue Arg183 participates in 5-phospho-alpha-D-ribose 1-diphosphate binding. Residues Arg200 and Arg229 each contribute to the GTP site. Residue 235–243 coordinates 5-phospho-alpha-D-ribose 1-diphosphate; that stretch reads YPILSTGNT. 296-298 lines the uracil pocket; it reads THF.

The protein belongs to the UPRTase family.

It is found in the cytoplasm. It localises to the nucleus. This Bos taurus (Bovine) protein is Uracil phosphoribosyltransferase homolog (UPRT).